Reading from the N-terminus, the 141-residue chain is Large ribosomal subunit protein uL11 (141 aa).

Belongs to the universal ribosomal protein uL11 family. In terms of assembly, part of the ribosomal stalk of the 50S ribosomal subunit. Interacts with L10 and the large rRNA to form the base of the stalk. L10 forms an elongated spine to which L12 dimers bind in a sequential fashion forming a multimeric L10(L12)X complex. One or more lysine residues are methylated.

Functionally, forms part of the ribosomal stalk which helps the ribosome interact with GTP-bound translation factors. This is Large ribosomal subunit protein uL11 from Nostoc punctiforme (strain ATCC 29133 / PCC 73102).